The sequence spans 145 residues: Inner membrane protein YiaA (145 aa).

Residues 1-12 (MDNKISTYSPAF) lie on the Cytoplasmic side of the membrane. The helical transmembrane segment at 13–32 (SIVSWIALVGGIVTYLLGLW) threads the bilayer. Residues 33–41 (NAEMQLNEK) lie on the Periplasmic side of the membrane. A helical membrane pass occupies residues 42-59 (GYYFAVLVLGLFSAASYQ). Over 60 to 71 (KTVRDKYEGIPT) the chain is Cytoplasmic. The chain crosses the membrane as a helical span at residues 72-94 (TSIYYMTCLTVFIISVALLMVGL). Over 95–98 (WNAT) the chain is Periplasmic. Residues 99-121 (LLLSEKGFYGLAFFLSLFGAVAV) form a helical membrane-spanning segment. Over 122-145 (QKNIRDAGINPPKETQVTQEEYSE) the chain is Cytoplasmic.

Its subcellular location is the cell inner membrane. The protein is Inner membrane protein YiaA (yiaA) of Escherichia coli (strain K12).